Consider the following 330-residue polypeptide: Small ribosomal subunit protein uS15m (330 aa).

The protein belongs to the universal ribosomal protein uS15 family. In terms of assembly, component of the mitochondrial ribosome small subunit (28S) which comprises a 12S rRNA and about 30 distinct proteins.

Its subcellular location is the mitochondrion. The chain is Small ribosomal subunit protein uS15m (mrps-15) from Caenorhabditis elegans.